A 311-amino-acid chain; its full sequence is MNKNPFIVCLMGPTASGKTDLAIALARKLPFEIISVDSAMVYRGLDIGTAKPNEEELQLTSHRLINICDPSFPYSAGQFYKDALSEIKTIEIRNRTPLLVGGTMLYFHILEQGFSDLPTADETVRKKIQEEAAQHGWAKIHERLNAIDPKSAARINPNDAQRIQRAFEIYETTGQPLSSYQSLKRFKALPYQFINLILAPENRSWLHQRIEKRFDQMLKNNFLEEVRQLYNRGDLNSDLPAIRTVGYRQVWKYLSGEYDYEMMRHKAIAATRQLAKRQLTWLRRWPDAKWFNSEDKDLISQVVDYLKGIGM.

Glycine 12–threonine 19 provides a ligand contact to ATP. A substrate-binding site is contributed by threonine 14–threonine 19. Interaction with substrate tRNA regions lie at residues aspartate 37–methionine 40 and glutamine 161–arginine 165.

This sequence belongs to the IPP transferase family. As to quaternary structure, monomer. Mg(2+) serves as cofactor.

It carries out the reaction adenosine(37) in tRNA + dimethylallyl diphosphate = N(6)-dimethylallyladenosine(37) in tRNA + diphosphate. Its function is as follows. Catalyzes the transfer of a dimethylallyl group onto the adenine at position 37 in tRNAs that read codons beginning with uridine, leading to the formation of N6-(dimethylallyl)adenosine (i(6)A). In Coxiella burnetii (strain RSA 331 / Henzerling II), this protein is tRNA dimethylallyltransferase.